A 243-amino-acid chain; its full sequence is MEMERINEDTIRVVIGNDDLNERGIRVLDLLGNHKQIESFFYSILEEVDVDHQFQDNDAVTFQVLPNRNGLELFISKNSDNLQDTIAKATQSPDQSDDSDSQDDVSDYLKRKLMQTDTNQVEDGQGIAHNPTKDTNDLDPYLDDPDTPTKEYVLKFDQFEDLVSLAQLFRPEGLASNLFKYRDQYYLELVFFVDQSSTATIKDDVAVALEYAHLANISADVLLEHGEKIMSNAALETIRHYFK.

Residues Asn119 to Pro140 form a disordered region.

The protein belongs to the MecA family. In terms of assembly, homodimer.

Its function is as follows. Enables the recognition and targeting of unfolded and aggregated proteins to the ClpC protease or to other proteins involved in proteolysis. The chain is Adapter protein MecA from Lactiplantibacillus plantarum (strain ATCC BAA-793 / NCIMB 8826 / WCFS1) (Lactobacillus plantarum).